The primary structure comprises 197 residues: Holliday junction branch migration complex subunit RuvA (197 aa).

The segment at 1 to 64 (MIASVRGTLI…EDALTLYGFK (64 aa)) is domain I. Residues 65–145 (TVEQRQLFET…GLPVAPGVSP (81 aa)) form a domain II region. Positions 146–153 (AVAAVNAE) are flexible linker. Residues 153 to 197 (ELSEMLVSLGFSSAEASTAIAALPPDAPLDLEERLRLALRYFGAR) form a domain III region.

It belongs to the RuvA family. As to quaternary structure, homotetramer. Forms an RuvA(8)-RuvB(12)-Holliday junction (HJ) complex. HJ DNA is sandwiched between 2 RuvA tetramers; dsDNA enters through RuvA and exits via RuvB. An RuvB hexamer assembles on each DNA strand where it exits the tetramer. Each RuvB hexamer is contacted by two RuvA subunits (via domain III) on 2 adjacent RuvB subunits; this complex drives branch migration. In the full resolvosome a probable DNA-RuvA(4)-RuvB(12)-RuvC(2) complex forms which resolves the HJ.

Its subcellular location is the cytoplasm. Its function is as follows. The RuvA-RuvB-RuvC complex processes Holliday junction (HJ) DNA during genetic recombination and DNA repair, while the RuvA-RuvB complex plays an important role in the rescue of blocked DNA replication forks via replication fork reversal (RFR). RuvA specifically binds to HJ cruciform DNA, conferring on it an open structure. The RuvB hexamer acts as an ATP-dependent pump, pulling dsDNA into and through the RuvAB complex. HJ branch migration allows RuvC to scan DNA until it finds its consensus sequence, where it cleaves and resolves the cruciform DNA. The sequence is that of Holliday junction branch migration complex subunit RuvA from Roseiflexus castenholzii (strain DSM 13941 / HLO8).